We begin with the raw amino-acid sequence, 393 residues long: Protein shisa-9B (393 aa).

The signal sequence occupies residues 1-20; sequence MKSTGLLLGYFLMKVLVCDA. The Extracellular segment spans residues 21-131; it reads EGEPGKSLDG…MDQHDPTKDK (111 aa). Residues 28 to 52 form a disordered region; sequence LDGAVTASGSNDSRDGENGLSETPH. N38 is a glycosylation site (N-linked (GlcNAc...) asparagine). A helical membrane pass occupies residues 132–152; the sequence is TNLIVYIICGVVAIMALVGIF. At 153-393 the chain is on the cytoplasmic side; it reads TKLGLEKAHR…VTNSKTEVTV (241 aa). The interval 307-340 is disordered; that stretch reads QKQNGHKSKSTKVHSSHPLAYGSNTIANPGRMSS. Positions 310–321 are enriched in basic residues; that stretch reads NGHKSKSTKVHS.

It belongs to the shisa family. SHISA9 subfamily. Component of some AMPA receptors (ionotropic glutamate receptors) complex.

The protein localises to the cell projection. It is found in the dendritic spine membrane. Its subcellular location is the synapse. Regulator of short-term neuronal synaptic plasticity in the dentate gyrus. Associates with AMPA receptors (ionotropic glutamate receptors) in synaptic spines and promotes AMPA receptor desensitization at excitatory synapses. The protein is Protein shisa-9B (shisa9b) of Danio rerio (Zebrafish).